The sequence spans 430 residues: Serine--tRNA ligase (430 aa).

237–239 (TAE) is a binding site for L-serine. An ATP-binding site is contributed by 268 to 270 (RRE). Glu-291 is an L-serine binding site. 355–358 (EISS) contacts ATP. Ser-391 contributes to the L-serine binding site.

The protein belongs to the class-II aminoacyl-tRNA synthetase family. Type-1 seryl-tRNA synthetase subfamily. Homodimer. The tRNA molecule binds across the dimer.

It is found in the cytoplasm. It catalyses the reaction tRNA(Ser) + L-serine + ATP = L-seryl-tRNA(Ser) + AMP + diphosphate + H(+). The catalysed reaction is tRNA(Sec) + L-serine + ATP = L-seryl-tRNA(Sec) + AMP + diphosphate + H(+). The protein operates within aminoacyl-tRNA biosynthesis; selenocysteinyl-tRNA(Sec) biosynthesis; L-seryl-tRNA(Sec) from L-serine and tRNA(Sec): step 1/1. Its function is as follows. Catalyzes the attachment of serine to tRNA(Ser). Is also able to aminoacylate tRNA(Sec) with serine, to form the misacylated tRNA L-seryl-tRNA(Sec), which will be further converted into selenocysteinyl-tRNA(Sec). This Magnetococcus marinus (strain ATCC BAA-1437 / JCM 17883 / MC-1) protein is Serine--tRNA ligase.